The following is a 145-amino-acid chain: Cell division protein SepF (145 aa).

This sequence belongs to the SepF family. Homodimer. Interacts with FtsZ.

Its subcellular location is the cytoplasm. Its function is as follows. Cell division protein that is part of the divisome complex and is recruited early to the Z-ring. Probably stimulates Z-ring formation, perhaps through the cross-linking of FtsZ protofilaments. Its function overlaps with FtsA. The sequence is that of Cell division protein SepF from Lactobacillus acidophilus (strain ATCC 700396 / NCK56 / N2 / NCFM).